We begin with the raw amino-acid sequence, 154 residues long: UPF0225 protein YE2246 (154 aa).

It belongs to the UPF0225 family.

The sequence is that of UPF0225 protein YE2246 from Yersinia enterocolitica serotype O:8 / biotype 1B (strain NCTC 13174 / 8081).